The primary structure comprises 184 residues: UPF0301 protein RHOS4_26140 (184 aa).

It belongs to the UPF0301 (AlgH) family.

This is UPF0301 protein RHOS4_26140 from Cereibacter sphaeroides (strain ATCC 17023 / DSM 158 / JCM 6121 / CCUG 31486 / LMG 2827 / NBRC 12203 / NCIMB 8253 / ATH 2.4.1.) (Rhodobacter sphaeroides).